A 543-amino-acid chain; its full sequence is Nucleoside-triphosphatase ntp-1 (543 aa).

A helical membrane pass occupies residues 40–60; it reads VYGFLLTCTCLLLILTIIPMS. The Proton acceptor role is filled by Glu-212. The helical transmembrane segment at 497 to 517 threads the bilayer; sequence QISNFFSFFVILIIVLAVALY.

Belongs to the GDA1/CD39 NTPase family.

The protein resides in the golgi apparatus membrane. It catalyses the reaction a ribonucleoside 5'-triphosphate + H2O = a ribonucleoside 5'-diphosphate + phosphate + H(+). Functionally, seems to be able to hydrolyze CTP, ATP and UTP. This chain is Nucleoside-triphosphatase ntp-1, found in Caenorhabditis elegans.